Here is a 154-residue protein sequence, read N- to C-terminus: Protein X (154 aa).

Residues 68-117 (PCALRFTSARRMETTVNAPWSLPTVLHKRTIGLSGRSMTWIEEYIKDCVF) form a mitochondrial targeting sequence region.

This sequence belongs to the orthohepadnavirus protein X family. In terms of assembly, may form homodimer. May interact with host CEBPA, CFLAR, CREB1, DDB1, E4F1, HBXIP, HSPD1/HSP60, NFKBIA, POLR2E and SMAD4. Interacts with host SMC5-SMC6 complex and induces its degradation. Interacts with host TRPC4AP; leading to prevent ubiquitination of TRPC4AP. Interacts with host PLSCR1; this interaction promotes ubiquitination and degradation of HBx and impairs HBx-mediated cell proliferation. A fraction may be phosphorylated in insect cells and HepG2 cells, a human hepatoblastoma cell line. Phosphorylated in vitro by host protein kinase C or mitogen-activated protein kinase. N-acetylated in insect cells.

It is found in the host cytoplasm. It localises to the host nucleus. The protein localises to the host mitochondrion. Functionally, multifunctional protein that plays a role in silencing host antiviral defenses and promoting viral transcription. Does not seem to be essential for HBV infection. May be directly involved in development of cirrhosis and liver cancer (hepatocellular carcinoma). Most of cytosolic activities involve modulation of cytosolic calcium. The effect on apoptosis is controversial depending on the cell types in which the studies have been conducted. May induce apoptosis by localizing in mitochondria and causing loss of mitochondrial membrane potential. May also modulate apoptosis by binding host CFLAR, a key regulator of the death-inducing signaling complex (DISC). Promotes viral transcription by using the host E3 ubiquitin ligase DDB1 to target the SMC5-SMC6 complex to proteasomal degradation. This host complex would otherwise bind to viral episomal DNA, and prevents its transcription. Moderately stimulates transcription of many different viral and cellular transcription elements. Promoters and enhancers stimulated by HBx contain DNA binding sites for NF-kappa-B, AP-1, AP-2, c-EBP, ATF/CREB, or the calcium-activated factor NF-AT. This is Protein X from Homo sapiens (Human).